Here is a 62-residue protein sequence, read N- to C-terminus: MAVTIDYSLCKGAECAECVNNCPMEVFEIEGDKVVVARPDDCTYCGVCEDVCPTGAVKVEPE.

4Fe-4S ferredoxin-type domains lie at 2–31 and 32–62; these read AVTI…EIEG and DKVV…VEPE. Residues C10, C15, C18, C22, C42, C45, C48, and C52 each contribute to the [4Fe-4S] cluster site.

It depends on [4Fe-4S] cluster as a cofactor.

This is an uncharacterized protein from Methanocaldococcus jannaschii (strain ATCC 43067 / DSM 2661 / JAL-1 / JCM 10045 / NBRC 100440) (Methanococcus jannaschii).